The following is a 234-amino-acid chain: Riboflavin kinase (234 aa).

Positions 1 to 98 are H-T-H motif-like; that stretch reads MAESTTAVGH…QEIFGDNSSV (98 aa). A riboflavin kinase region spans residues 99–234; that stretch reads VELTGTVTSG…RITVQLKPKE (136 aa). 108 to 113 provides a ligand contact to CDP; that stretch reads GMGEGR. 2 residues coordinate Mg(2+): Thr137 and Asn139. FMN contacts are provided by Thr199 and Glu207. 212-215 is a binding site for CDP; it reads ERLR.

This sequence belongs to the archaeal riboflavin kinase family. Mg(2+) serves as cofactor.

It catalyses the reaction riboflavin + CTP = CDP + FMN + H(+). The protein operates within cofactor biosynthesis; FMN biosynthesis; FMN from riboflavin (CTP route): step 1/1. Catalyzes the CTP-dependent phosphorylation of riboflavin (vitamin B2) to form flavin mononucleotide (FMN). In Haloquadratum walsbyi (strain DSM 16790 / HBSQ001), this protein is Riboflavin kinase (ribK).